Reading from the N-terminus, the 324-residue chain is Beta-ketoacyl-[acyl-carrier-protein] synthase III (324 aa).

Catalysis depends on residues Cys-113 and His-251. An ACP-binding region spans residues Gln-252–Arg-256. Asn-281 is an active-site residue.

The protein belongs to the thiolase-like superfamily. FabH family. As to quaternary structure, homodimer.

It localises to the cytoplasm. It carries out the reaction malonyl-[ACP] + acetyl-CoA + H(+) = 3-oxobutanoyl-[ACP] + CO2 + CoA. It participates in lipid metabolism; fatty acid biosynthesis. Catalyzes the condensation reaction of fatty acid synthesis by the addition to an acyl acceptor of two carbons from malonyl-ACP. Catalyzes the first condensation reaction which initiates fatty acid synthesis and may therefore play a role in governing the total rate of fatty acid production. Possesses both acetoacetyl-ACP synthase and acetyl transacylase activities. Its substrate specificity determines the biosynthesis of branched-chain and/or straight-chain of fatty acids. This is Beta-ketoacyl-[acyl-carrier-protein] synthase III from Bartonella bacilliformis (strain ATCC 35685 / KC583 / Herrer 020/F12,63).